Consider the following 145-residue polypeptide: Transcription antitermination protein NusB (145 aa).

The protein belongs to the NusB family.

In terms of biological role, involved in transcription antitermination. Required for transcription of ribosomal RNA (rRNA) genes. Binds specifically to the boxA antiterminator sequence of the ribosomal RNA (rrn) operons. The sequence is that of Transcription antitermination protein NusB from Thiobacillus denitrificans (strain ATCC 25259 / T1).